The following is a 107-amino-acid chain: NADH-quinone oxidoreductase subunit K (107 aa).

The next 3 membrane-spanning stretches (helical) occupy residues 9–29 (IGVN…MFAV), 36–56 (IVIL…FLTF), and 68–88 (FSLF…AIVI).

The protein belongs to the complex I subunit 4L family. In terms of assembly, NDH-1 is composed of 14 different subunits. Subunits NuoA, H, J, K, L, M, N constitute the membrane sector of the complex.

It is found in the cell inner membrane. It carries out the reaction a quinone + NADH + 5 H(+)(in) = a quinol + NAD(+) + 4 H(+)(out). NDH-1 shuttles electrons from NADH, via FMN and iron-sulfur (Fe-S) centers, to quinones in the respiratory chain. The immediate electron acceptor for the enzyme in this species is believed to be a menaquinone. Couples the redox reaction to proton translocation (for every two electrons transferred, four hydrogen ions are translocated across the cytoplasmic membrane), and thus conserves the redox energy in a proton gradient. In Chlorobaculum tepidum (strain ATCC 49652 / DSM 12025 / NBRC 103806 / TLS) (Chlorobium tepidum), this protein is NADH-quinone oxidoreductase subunit K.